We begin with the raw amino-acid sequence, 463 residues long: Argininosuccinate lyase (463 aa).

It belongs to the lyase 1 family. Argininosuccinate lyase subfamily.

The protein localises to the cytoplasm. The enzyme catalyses 2-(N(omega)-L-arginino)succinate = fumarate + L-arginine. The protein operates within amino-acid biosynthesis; L-arginine biosynthesis; L-arginine from L-ornithine and carbamoyl phosphate: step 3/3. This chain is Argininosuccinate lyase, found in Streptococcus pneumoniae (strain JJA).